The sequence spans 208 residues: MSRRAAVKTPRAGAAARRGAVARRTKETDVAVELRLEPGEAAISTGLPFFDHMLDQISRHGGMALTVRAKGDLQVDAHHTVEDVGIGLGEALRQALEDKAGLARYGHAVVPLDEALVEAVVDLSGRPHLTFNAKLPSGKKFIGGYDVDLTQDFLQALVNHARICVHVNVRYGRNLHHVVEAIFKATARALRAATAREGTALPSTKGTL.

It belongs to the imidazoleglycerol-phosphate dehydratase family.

The protein resides in the cytoplasm. It carries out the reaction D-erythro-1-(imidazol-4-yl)glycerol 3-phosphate = 3-(imidazol-4-yl)-2-oxopropyl phosphate + H2O. Its pathway is amino-acid biosynthesis; L-histidine biosynthesis; L-histidine from 5-phospho-alpha-D-ribose 1-diphosphate: step 6/9. The protein is Imidazoleglycerol-phosphate dehydratase of Anaeromyxobacter dehalogenans (strain 2CP-1 / ATCC BAA-258).